A 916-amino-acid chain; its full sequence is Inter-alpha-trypsin inhibitor heavy chain H4 (916 aa).

Residues 1-27 (MKTPAPGRIHSIVLVLLSLAVLQTSKA) form the signal peptide. The region spanning 28-149 (QKVQNDIDIY…KVTFELVYEE (122 aa)) is the VIT domain. N-linked (GlcNAc...) asparagine glycans are attached at residues N82 and N208. In terms of domain architecture, VWFA spans 275-458 (NVIFVIDKSG…LQLQDFYQEV (184 aa)). N518 carries N-linked (GlcNAc...) asparagine glycosylation. 2 disordered regions span residues 597-616 (PEGQ…ESRG) and 678-701 (PLAP…TDFR). The span at 678-689 (PLAPASAPSPTS) shows a compositional bias: low complexity. O-linked (GalNAc...) serine glycosylation occurs at S683. Residues T705, T706, and T708 are each glycosylated (O-linked (GalNAc...) threonine). A disulfide bridge links C733 with C911.

The protein belongs to the ITIH family. Interacts (via C-terminus) with DNAJC1 (via SANT 2 domain). Appears to be both N- and O-glycosylated.

It localises to the secreted. In terms of biological role, type II acute-phase protein (APP) involved in inflammatory responses to trauma. May also play a role in liver development or regeneration. The protein is Inter-alpha-trypsin inhibitor heavy chain H4 (ITIH4) of Bos taurus (Bovine).